The following is an 875-amino-acid chain: Alanine--tRNA ligase (875 aa).

Zn(2+)-binding residues include H564, H568, C666, and H670.

Belongs to the class-II aminoacyl-tRNA synthetase family. In terms of assembly, homotetramer. Zn(2+) is required as a cofactor.

It localises to the cytoplasm. The catalysed reaction is tRNA(Ala) + L-alanine + ATP = L-alanyl-tRNA(Ala) + AMP + diphosphate. In terms of biological role, catalyzes the attachment of alanine to tRNA(Ala) in a two-step reaction: alanine is first activated by ATP to form Ala-AMP and then transferred to the acceptor end of tRNA(Ala). Also edits incorrectly charged Ser-tRNA(Ala) and Gly-tRNA(Ala) via its editing domain. This is Alanine--tRNA ligase from Citrobacter koseri (strain ATCC BAA-895 / CDC 4225-83 / SGSC4696).